The sequence spans 475 residues: Ribulose bisphosphate carboxylase large chain (475 aa).

The propeptide occupies 1-2; the sequence is MS. Proline 3 carries the N-acetylproline modification. Lysine 14 carries the post-translational modification N6,N6,N6-trimethyllysine. Asparagine 123 and threonine 173 together coordinate substrate. Lysine 175 serves as the catalytic Proton acceptor. Lysine 177 contributes to the substrate binding site. Mg(2+) contacts are provided by lysine 201, aspartate 203, and glutamate 204. Position 201 is an N6-carboxylysine (lysine 201). Histidine 294 acts as the Proton acceptor in catalysis. Substrate-binding residues include arginine 295, histidine 327, and serine 379.

It belongs to the RuBisCO large chain family. Type I subfamily. In terms of assembly, heterohexadecamer of 8 large chains and 8 small chains; disulfide-linked. The disulfide link is formed within the large subunit homodimers. Requires Mg(2+) as cofactor. In terms of processing, the disulfide bond which can form in the large chain dimeric partners within the hexadecamer appears to be associated with oxidative stress and protein turnover.

It localises to the plastid. It is found in the chloroplast. It carries out the reaction 2 (2R)-3-phosphoglycerate + 2 H(+) = D-ribulose 1,5-bisphosphate + CO2 + H2O. The enzyme catalyses D-ribulose 1,5-bisphosphate + O2 = 2-phosphoglycolate + (2R)-3-phosphoglycerate + 2 H(+). Its function is as follows. RuBisCO catalyzes two reactions: the carboxylation of D-ribulose 1,5-bisphosphate, the primary event in carbon dioxide fixation, as well as the oxidative fragmentation of the pentose substrate in the photorespiration process. Both reactions occur simultaneously and in competition at the same active site. The protein is Ribulose bisphosphate carboxylase large chain of Amaranthus tricolor (Joseph's coat).